A 149-amino-acid polypeptide reads, in one-letter code: Large ribosomal subunit protein uL24 (149 aa).

Belongs to the universal ribosomal protein uL24 family. Part of the 50S ribosomal subunit.

In terms of biological role, one of two assembly initiator proteins, it binds directly to the 5'-end of the 23S rRNA, where it nucleates assembly of the 50S subunit. One of the proteins that surrounds the polypeptide exit tunnel on the outside of the subunit. In Nostoc sp. (strain PCC 7120 / SAG 25.82 / UTEX 2576), this protein is Large ribosomal subunit protein uL24.